The following is an 85-amino-acid chain: UPF0291 protein SPCG_1462 (85 aa).

The disordered stretch occupies residues Thr-62–Ser-85.

The protein belongs to the UPF0291 family.

It localises to the cytoplasm. The polypeptide is UPF0291 protein SPCG_1462 (Streptococcus pneumoniae (strain CGSP14)).